We begin with the raw amino-acid sequence, 63 residues long: Beta-defensin 3 (63 aa).

The signal sequence occupies residues 1-20; the sequence is MRIHYLLFSFLLVLLSPLSA. A propeptide spanning residues 21–22 is cleaved from the precursor; that stretch reads FS. 3 cysteine pairs are disulfide-bonded: cysteine 31-cysteine 59, cysteine 38-cysteine 52, and cysteine 42-cysteine 60.

This sequence belongs to the beta-defensin family.

Its subcellular location is the secreted. Functionally, has bactericidal activity. In Rattus norvegicus (Rat), this protein is Beta-defensin 3 (Defb3).